Here is a 170-residue protein sequence, read N- to C-terminus: RNA pyrophosphohydrolase (170 aa).

Residues 6–150 (GFRPNVGIIL…KRDVYRRALR (145 aa)) enclose the Nudix hydrolase domain. Positions 39–60 (GGINAHESPEQALYRELHEEVG) match the Nudix box motif.

Belongs to the Nudix hydrolase family. RppH subfamily. Requires a divalent metal cation as cofactor.

Its function is as follows. Accelerates the degradation of transcripts by removing pyrophosphate from the 5'-end of triphosphorylated RNA, leading to a more labile monophosphorylated state that can stimulate subsequent ribonuclease cleavage. In Cellvibrio japonicus (strain Ueda107) (Pseudomonas fluorescens subsp. cellulosa), this protein is RNA pyrophosphohydrolase.